The following is a 277-amino-acid chain: Membrane protein insertase YidC 2 (277 aa).

The signal sequence occupies residues 1-22; the sequence is MKKYRKILAMLAVLAIVLVLSG. Residue cysteine 23 is the site of N-palmitoyl cysteine attachment. Cysteine 23 carries the S-diacylglycerol cysteine lipid modification. The next 5 helical transmembrane spans lie at 35–55, 60–80, 130–150, 170–190, and 208–228; these read FWDG…SNLF, GLGI…LMIF, ASML…QAIW, PYYV…WLAM, and PVII…YWVI. A compositionally biased stretch (basic and acidic residues) spans 251–266; the sequence is EAKKQAERDRKRTLEK. Positions 251 to 277 are disordered; it reads EAKKQAERDRKRTLEKARKRAIRNHKR. The span at 267–277 shows a compositional bias: basic residues; sequence ARKRAIRNHKR.

This sequence belongs to the OXA1/ALB3/YidC family. Type 2 subfamily.

The protein localises to the cell membrane. Required for the insertion and/or proper folding and/or complex formation of integral membrane proteins into the membrane. Involved in integration of membrane proteins that insert both dependently and independently of the Sec translocase complex, as well as at least some lipoproteins. The chain is Membrane protein insertase YidC 2 from Lactiplantibacillus plantarum (strain ATCC BAA-793 / NCIMB 8826 / WCFS1) (Lactobacillus plantarum).